The sequence spans 1250 residues: Myosin-1 (1250 aa).

Residues 1 to 43 (MGHSRRPAGGEKKSRGFGRSKAAADVGDGRQTGGKPQVKKATF) form a disordered region. The Myosin motor domain occupies 51–730 (IGVSDLTLLS…TLFALEAMRD (680 aa)). 144-151 (GESGAGKT) lines the ATP pocket. S372 carries the phosphoserine modification. An actin-binding region spans residues 419-501 (SIGILDIYGF…PGVFAALNDA (83 aa)). IQ domains follow at residues 734 to 754 (HNMA…RTEC) and 755 to 780 (AIRI…QGHQ). One can recognise a TH1 domain in the interval 788–978 (RRRMSLLGSR…TIHTGPGEPA (191 aa)). 2 disordered regions span residues 962-1079 (DDSY…PKKP) and 1126-1250 (WTPE…DDDW). The segment covering 1021–1035 (AAQPLPRATPQPAAP) has biased composition (pro residues). Low complexity predominate over residues 1036-1051 (QPAARAVPQPVAAVAA). Pro residues-rich tracts occupy residues 1064-1077 (APPP…PAPK) and 1139-1151 (TPKP…PPAA). The 62-residue stretch at 1076-1137 (PKKPTAKVLY…PEAYLEEQVA (62 aa)) folds into the SH3 domain. Low complexity predominate over residues 1152-1170 (PRSTPAPATNGAAAAAKAK). Residues 1201–1222 (VSMNSHDSSGGSGRGTPNSMSN) show a composition bias toward polar residues. A compositionally biased stretch (low complexity) spans 1223–1232 (ASLAGGLAEA).

Belongs to the TRAFAC class myosin-kinesin ATPase superfamily. Myosin family. In terms of processing, phosphorylation of the TEDS site (Ser-372) is required for the polarization of the actin cytoskeleton. Phosphorylation probably activates the myosin-I ATPase activity.

It is found in the cytoplasm. The protein resides in the cytoskeleton. Its subcellular location is the actin patch. Type-I myosin implicated in the organization of the actin cytoskeleton. Required for proper actin cytoskeleton polarization. At the cell cortex, assembles in patch-like structures together with proteins from the actin-polymerizing machinery and promotes actin assembly. Functions as actin nucleation-promoting factor (NPF) for the Arp2/3 complex. Plays an important role in polarized growth, spore germination, hyphal morphogenesis, and septal wall formation. In Neosartorya fischeri (strain ATCC 1020 / DSM 3700 / CBS 544.65 / FGSC A1164 / JCM 1740 / NRRL 181 / WB 181) (Aspergillus fischerianus), this protein is Myosin-1 (myoA).